The primary structure comprises 159 residues: Small ribosomal subunit protein uS13 (159 aa).

The disordered stretch occupies residues 136–159 (QRTRSTGRSGATVGVTRKKTQAKK). Positions 138–149 (TRSTGRSGATVG) are enriched in low complexity.

The protein belongs to the universal ribosomal protein uS13 family. Part of the 30S ribosomal subunit. Forms a loose heterodimer with protein S19. Forms two bridges to the 50S subunit in the 70S ribosome.

Located at the top of the head of the 30S subunit, it contacts several helices of the 16S rRNA. In the 70S ribosome it contacts the 23S rRNA (bridge B1a) and protein L5 of the 50S subunit (bridge B1b), connecting the 2 subunits; these bridges are implicated in subunit movement. This is Small ribosomal subunit protein uS13 from Methanothrix thermoacetophila (strain DSM 6194 / JCM 14653 / NBRC 101360 / PT) (Methanosaeta thermophila).